The chain runs to 101 residues: Guanyl-specific ribonuclease St (101 aa).

A disulfide bond links Cys4 and Cys54. Glu61 serves as the catalytic Proton acceptor. His91 serves as the catalytic Proton donor.

This sequence belongs to the ribonuclease N1/T1 family.

The enzyme catalyses [RNA] containing guanosine + H2O = an [RNA fragment]-3'-guanosine-3'-phosphate + a 5'-hydroxy-ribonucleotide-3'-[RNA fragment].. This Saccharopolyspora erythraea (Streptomyces erythraeus) protein is Guanyl-specific ribonuclease St.